The sequence spans 228 residues: ATP synthase F(0) complex subunit a (228 aa).

The next 5 helical transmembrane spans lie at 13 to 33, 69 to 89, 98 to 118, 139 to 159, and 194 to 214; these read NILA…IFPM, WALI…LGLL, QLSM…LIGL, IPTL…ALGV, and ILLF…ALVF.

The protein belongs to the ATPase A chain family. Component of the ATP synthase complex composed at least of ATP5F1A/subunit alpha, ATP5F1B/subunit beta, ATP5MC1/subunit c (homooctomer), MT-ATP6/subunit a, MT-ATP8/subunit 8, ATP5ME/subunit e, ATP5MF/subunit f, ATP5MG/subunit g, ATP5MK/subunit k, ATP5MJ/subunit j, ATP5F1C/subunit gamma, ATP5F1D/subunit delta, ATP5F1E/subunit epsilon, ATP5PF/subunit F6, ATP5PB/subunit b, ATP5PD/subunit d, ATP5PO/subunit OSCP. ATP synthase complex consists of a soluble F(1) head domain (subunits alpha(3) and beta(3)) - the catalytic core - and a membrane F(0) domain - the membrane proton channel (subunits c, a, 8, e, f, g, k and j). These two domains are linked by a central stalk (subunits gamma, delta, and epsilon) rotating inside the F1 region and a stationary peripheral stalk (subunits F6, b, d, and OSCP). Interacts with DNAJC30; interaction is direct.

Its subcellular location is the mitochondrion inner membrane. It catalyses the reaction H(+)(in) = H(+)(out). Functionally, subunit a, of the mitochondrial membrane ATP synthase complex (F(1)F(0) ATP synthase or Complex V) that produces ATP from ADP in the presence of a proton gradient across the membrane which is generated by electron transport complexes of the respiratory chain. ATP synthase complex consist of a soluble F(1) head domain - the catalytic core - and a membrane F(1) domain - the membrane proton channel. These two domains are linked by a central stalk rotating inside the F(1) region and a stationary peripheral stalk. During catalysis, ATP synthesis in the catalytic domain of F(1) is coupled via a rotary mechanism of the central stalk subunits to proton translocation. With the subunit c (ATP5MC1), forms the proton-conducting channel in the F(0) domain, that contains two crucial half-channels (inlet and outlet) that facilitate proton movement from the mitochondrial intermembrane space (IMS) into the matrix. Protons are taken up via the inlet half-channel and released through the outlet half-channel, following a Grotthuss mechanism. This is ATP synthase F(0) complex subunit a from Pelomedusa subrufa (African side-necked turtle).